We begin with the raw amino-acid sequence, 429 residues long: Adenylosuccinate synthetase (429 aa).

GTP contacts are provided by residues 12 to 18 (GDEGKGK) and 40 to 42 (GHT). Asp-13 (proton acceptor) is an active-site residue. Mg(2+) contacts are provided by Asp-13 and Gly-40. Residues 13–16 (DEGK), 38–41 (NAGH), Thr-128, Arg-142, Gln-223, Thr-238, and Arg-302 each bind IMP. His-41 (proton donor) is an active-site residue. Residue 298 to 304 (VNTGRPR) coordinates substrate. Residues Arg-304, 330–332 (KLD), and 412–414 (GVG) contribute to the GTP site.

This sequence belongs to the adenylosuccinate synthetase family. As to quaternary structure, homodimer. The cofactor is Mg(2+).

Its subcellular location is the cytoplasm. The catalysed reaction is IMP + L-aspartate + GTP = N(6)-(1,2-dicarboxyethyl)-AMP + GDP + phosphate + 2 H(+). The protein operates within purine metabolism; AMP biosynthesis via de novo pathway; AMP from IMP: step 1/2. Its function is as follows. Plays an important role in the de novo pathway of purine nucleotide biosynthesis. Catalyzes the first committed step in the biosynthesis of AMP from IMP. This chain is Adenylosuccinate synthetase, found in Kocuria rhizophila (strain ATCC 9341 / DSM 348 / NBRC 103217 / DC2201).